A 134-amino-acid chain; its full sequence is DNA-binding protein StpA (134 aa).

Residues 73-94 (EELLGNSSAAAPRAGKKRQPRP) form a disordered region. The DNA-binding element occupies 112–117 (QGRTPK).

Belongs to the histone-like protein H-NS family. Forms homodimers, can interact with H-NS. May interact with Hha and/or Cnu.

It localises to the cytoplasm. The protein localises to the nucleoid. A DNA-binding protein that acts in a fashion similar to H-NS, repressing gene transcription. A subset of H-NS/StpA-regulated genes require auxillary proteins for repression; these auxillary proteins (Hha and other similar proteins) may also modulate oligomerization of the H-NS/StpA complex. The chain is DNA-binding protein StpA (stpA) from Escherichia coli O157:H7.